Here is a 200-residue protein sequence, read N- to C-terminus: UPF0301 protein Veis_1517 (200 aa).

This sequence belongs to the UPF0301 (AlgH) family.

The polypeptide is UPF0301 protein Veis_1517 (Verminephrobacter eiseniae (strain EF01-2)).